The sequence spans 291 residues: tRNA N(3)-cytidine methyltransferase METTL8, mitochondrial (291 aa).

The N-terminal 21 residues, 1–21, are a transit peptide targeting the mitochondrion; the sequence is MNMIWRNSISCLRLGKVPHRY. Lys80 is covalently cross-linked (Glycyl lysine isopeptide (Lys-Gly) (interchain with G-Cter in SUMO)). S-adenosyl-L-methionine is bound by residues Trp89 and Tyr93. Residues 141–187 form a disordered region; it reads FSRMHCPTVPDEKNHYEKSSGSSEGQSKTESDFSNLDSEKHKKGPME. A compositionally biased stretch (low complexity) spans 159–168; that stretch reads SSGSSEGQSK. Gly204, Asp230, and Asp256 together coordinate S-adenosyl-L-methionine.

Belongs to the methyltransferase superfamily. METL family. In terms of assembly, interacts with EP300.

Its subcellular location is the mitochondrion. It carries out the reaction cytidine(32) in tRNA(Ser) + S-adenosyl-L-methionine = N(3)-methylcytidine(32) in tRNA(Ser) + S-adenosyl-L-homocysteine + H(+). The catalysed reaction is cytidine(32) in tRNA(Thr) + S-adenosyl-L-methionine = N(3)-methylcytidine(32) in tRNA(Thr) + S-adenosyl-L-homocysteine + H(+). It catalyses the reaction a cytidine in mRNA + S-adenosyl-L-methionine = an N(3)-methylcytidine in mRNA + S-adenosyl-L-homocysteine + H(+). Functionally, mitochondrial S-adenosyl-L-methionine-dependent methyltransferase that mediates N(3)-methylcytidine modification of residue 32 of the tRNA anticodon loop of mitochondrial tRNA(Ser)(UCN) and tRNA(Thr). N(3)-methylcytidine methylation modification regulates mitochondrial translation efficiency and is required for activity of the respiratory chain. N(3)-methylcytidine methylation of mitochondrial tRNA(Ser)(UCN) requires the formation of N(6)-dimethylallyladenosine(37) (i6A37) by TRIT1 as prerequisite. May also mediate N(3)-methylcytidine modification of mRNAs. The existence of N(3)-methylcytidine modification on mRNAs is however unclear, and additional evidences are required to confirm the role of the N(3)-methylcytidine-specific mRNA methyltransferase activity of METTL8 in vivo. This Homo sapiens (Human) protein is tRNA N(3)-cytidine methyltransferase METTL8, mitochondrial.